A 69-amino-acid polypeptide reads, in one-letter code: Brevinin-1CG1 (69 aa).

Residues 1-22 form the signal peptide; it reads MFTMKKSLLLLFFLGTINLSLC. The propeptide at 23–43 is removed in mature form; sequence EQERNAEEERRDDDEMDVEVE. A disulfide bridge connects residues cysteine 63 and cysteine 69.

As to expression, expressed by the skin glands.

It is found in the secreted. Functionally, antimicrobial peptide. Active against Gram-positive bacteria R.rhodochrous X15 and B.licheniformis X39 and against Gram-negative bacterium E.coli ATCC 25922. Has antifungal activity against a slime mold isolate. Has weak hemolytic activity against human erythrocytes. In Amolops chunganensis (Chungan torrent frog), this protein is Brevinin-1CG1.